A 294-amino-acid chain; its full sequence is NAD kinase (294 aa).

The Proton acceptor role is filled by D74. NAD(+) contacts are provided by residues 74 to 75 (DG), 148 to 149 (NE), H159, R176, D178, and 189 to 194 (TAYSLS).

The protein belongs to the NAD kinase family. A divalent metal cation is required as a cofactor.

The protein localises to the cytoplasm. The enzyme catalyses NAD(+) + ATP = ADP + NADP(+) + H(+). Its function is as follows. Involved in the regulation of the intracellular balance of NAD and NADP, and is a key enzyme in the biosynthesis of NADP. Catalyzes specifically the phosphorylation on 2'-hydroxyl of the adenosine moiety of NAD to yield NADP. The chain is NAD kinase from Pseudoalteromonas translucida (strain TAC 125).